A 644-amino-acid chain; its full sequence is Threonine--tRNA ligase (644 aa).

Residues 1-61 enclose the TGS domain; sequence MPDIQLPDGS…DQDAEVAIVT (61 aa). The segment at 242-535 is catalytic; sequence DHRRIGTELE…LIEHYEGKFP (294 aa). Positions 335, 386, and 512 each coordinate Zn(2+).

Belongs to the class-II aminoacyl-tRNA synthetase family. As to quaternary structure, homodimer. Zn(2+) is required as a cofactor.

It is found in the cytoplasm. The enzyme catalyses tRNA(Thr) + L-threonine + ATP = L-threonyl-tRNA(Thr) + AMP + diphosphate + H(+). Catalyzes the attachment of threonine to tRNA(Thr) in a two-step reaction: L-threonine is first activated by ATP to form Thr-AMP and then transferred to the acceptor end of tRNA(Thr). Also edits incorrectly charged L-seryl-tRNA(Thr). The protein is Threonine--tRNA ligase of Acidithiobacillus ferrooxidans (strain ATCC 23270 / DSM 14882 / CIP 104768 / NCIMB 8455) (Ferrobacillus ferrooxidans (strain ATCC 23270)).